A 514-amino-acid chain; its full sequence is Glutamate--cysteine ligase, chloroplastic (514 aa).

The N-terminal 55 residues, 1-55 (MALLSQAGGAYTVPSGHVSSRTGTKTVSGCVNVLRMKETYVSSYSRTLSTKSMLK), are a transit peptide targeting the chloroplast. 2 disulfide bridges follow: cysteine 178-cysteine 398 and cysteine 341-cysteine 356.

Belongs to the carboxylate-amine ligase family. Glutamate--cysteine ligase type 2 subfamily. In terms of assembly, homodimer or monomer when oxidized or reduced, respectively. In terms of processing, the Cys-178-Cys-398 disulfide bridge is known to modulate the enzyme activity according to the redox status. The oxidized form constitutes the active enzyme.

Its subcellular location is the plastid. The protein resides in the chloroplast. The catalysed reaction is L-cysteine + L-glutamate + ATP = gamma-L-glutamyl-L-cysteine + ADP + phosphate + H(+). It participates in sulfur metabolism; glutathione biosynthesis; glutathione from L-cysteine and L-glutamate: step 1/2. Participates in the detoxification process. This is Glutamate--cysteine ligase, chloroplastic (GSH1) from Brassica juncea (Indian mustard).